We begin with the raw amino-acid sequence, 334 residues long: Phosphatidylglycerol--prolipoprotein diacylglyceryl transferase (334 aa).

4 consecutive transmembrane segments (helical) span residues 22 to 42, 54 to 74, 105 to 125, and 131 to 151; these read FLPF…VVAA, AEPG…IIGA, IWEG…GVGI, and GLRF…AQAI. A 1,2-diacyl-sn-glycero-3-phospho-(1'-sn-glycerol) is bound at residue Arg153. 2 helical membrane-spanning segments follow: residues 191-211 and 251-271; these read LFQP…FVIL and FLGI…GAII. Residues 296–334 are disordered; the sequence is PQAEVESGETDPEEILHADDDEERTGTHKPQATSLSGSN. The segment covering 301–318 has biased composition (acidic residues); that stretch reads ESGETDPEEILHADDDEE. Over residues 323–334 the composition is skewed to polar residues; sequence HKPQATSLSGSN.

The protein belongs to the Lgt family.

The protein resides in the cell membrane. It carries out the reaction L-cysteinyl-[prolipoprotein] + a 1,2-diacyl-sn-glycero-3-phospho-(1'-sn-glycerol) = an S-1,2-diacyl-sn-glyceryl-L-cysteinyl-[prolipoprotein] + sn-glycerol 1-phosphate + H(+). Its pathway is protein modification; lipoprotein biosynthesis (diacylglyceryl transfer). In terms of biological role, catalyzes the transfer of the diacylglyceryl group from phosphatidylglycerol to the sulfhydryl group of the N-terminal cysteine of a prolipoprotein, the first step in the formation of mature lipoproteins. In Leifsonia xyli subsp. xyli (strain CTCB07), this protein is Phosphatidylglycerol--prolipoprotein diacylglyceryl transferase.